A 298-amino-acid chain; its full sequence is Zinc finger protein-like 1 homolog (298 aa).

Residues 1 to 43 form a B box-type; degenerate zinc finger; it reads MGLCKCPKRLVTNQFCFEHRVNVCEHCMVQSHPKCIVQSYLQW. An RING-type; atypical zinc finger spans residues 53-101; it reads CTLCGTTLEQGDCVRLVCYHVFHWDCLNARQAALPANTAPRGHQCPACT. The disordered stretch occupies residues 199–230; that stretch reads AGDYASSRRPLLPRQSPIGGTDRDDNKYQRRT. Ser-214 carries the post-translational modification Phosphoserine. Residues 255–275 traverse the membrane as a helical segment; that stretch reads WFLVTAGILAFVLFVYLMAWL.

This sequence belongs to the ZFPL1 family.

Its subcellular location is the membrane. The protein is Zinc finger protein-like 1 homolog of Drosophila erecta (Fruit fly).